Here is a 130-residue protein sequence, read N- to C-terminus: Cytidine deaminase (130 aa).

The CMP/dCMP-type deaminase domain occupies 3 to 130 (VNLEWIIKQL…ELLMNGFKKS (128 aa)). 43-45 (NIE) is a binding site for substrate. Cys54 contributes to the Zn(2+) binding site. Glu56 acts as the Proton donor in catalysis. Positions 88 and 91 each coordinate Zn(2+).

This sequence belongs to the cytidine and deoxycytidylate deaminase family. As to quaternary structure, homodimer. It depends on Zn(2+) as a cofactor.

It catalyses the reaction cytidine + H2O + H(+) = uridine + NH4(+). It carries out the reaction 2'-deoxycytidine + H2O + H(+) = 2'-deoxyuridine + NH4(+). In terms of biological role, this enzyme scavenges exogenous and endogenous cytidine and 2'-deoxycytidine for UMP synthesis. This Mycoplasma genitalium (strain ATCC 33530 / DSM 19775 / NCTC 10195 / G37) (Mycoplasmoides genitalium) protein is Cytidine deaminase (cdd).